The sequence spans 654 residues: Sphingosine kinase 2 (654 aa).

Residues 1-17 are compositionally biased toward basic and acidic residues; sequence MNGHLEAEEQQDQRPDQ. The interval 1–28 is disordered; that stretch reads MNGHLEAEEQQDQRPDQELTGSWGHGPR. The segment at 1–175 is required for binding to sulfatide and phosphoinositides and for membrane localizatione; the sequence is MNGHLEAEEQ…LPGDGEITPD (175 aa). The short motif at 122-130 is the Nuclear localization signal element; that stretch reads RGRRGARRR. The DAGKc domain maps to 178 to 325; that stretch reads PRPPRLLLLV…LDLLSVTLAS (148 aa). ATP-binding positions include 188 to 190 and 220 to 224; these read NPF and TERQN. 245-248 is a substrate binding site; it reads SGDG. The Proton donor/acceptor role is filled by Asp-247. ATP is bound by residues Glu-252 and 277–279; that span reads GSG. Residue Asp-344 participates in substrate binding. Positions 351 and 357 each coordinate ATP. Residue Ser-387 is modified to Phosphoserine; by MAPK. Ser-393 and Ser-399 each carry phosphoserine. Residues 400–509 form a disordered region; that stretch reads ELTLTPDPAP…PLPTPDARVG (110 aa). The short motif at 416–425 is the Nuclear export signal element; sequence LHRSVSDLPL. 2 positions are modified to phosphoserine; by PKD: Ser-419 and Ser-421. Positions 447 to 461 are enriched in gly residues; sequence NGGGPELAGDWGGAG. The segment covering 462-482 has biased composition (low complexity); the sequence is DAPLSPDPLLSSPPGSPKAAL. Ser-477 carries the phosphoserine modification. Phosphothreonine; by MAPK is present on Thr-614. Position 622 to 624 (622 to 624) interacts with ATP; the sequence is DGE.

As to quaternary structure, interacts with histone H3. Interacts with HDAC1, HDAC2, MBD2 and SIN3A. Interacts with EEF1A1; the interaction enhances SPHK2 kinase activity. Interacts with PHB2. It depends on Mg(2+) as a cofactor. Phosphorylated by PKD on Ser-419 and Ser-421 upon PMA treatment. Phosphorylation induces export from the nucleus to the cytoplasm. Phosphorylated by MAPK1 and MAPK2 at Ser-387 and Thr-614, phosphorylation is induced by agonists such as EGF and PMA and increases kinase activity. In terms of processing, cleaved by CASP1 in apoptotic cells. The truncated form is released from cells. In terms of tissue distribution, mainly expressed in adult kidney, liver, and brain. Expressed in cerebral cortex and hippocampus (at protein level). Isoform 1 is the predominant form expressed in most tissues.

The protein resides in the cytoplasm. Its subcellular location is the nucleus. It is found in the endoplasmic reticulum. It localises to the mitochondrion inner membrane. The protein localises to the lysosome membrane. It catalyses the reaction a sphingoid base + ATP = a sphingoid 1-phosphate + ADP + H(+). The catalysed reaction is sphing-4-enine + ATP = sphing-4-enine 1-phosphate + ADP + H(+). It carries out the reaction sphinganine + ATP = sphinganine 1-phosphate + ADP + H(+). The enzyme catalyses (4R)-hydroxysphinganine + ATP = (4R)-hydroxysphinganine 1-phosphate + ADP + H(+). Inhibited by sulfatide. Kinase activity is increased by phosphorylation by MAPK2 upon PMA or EGF treatments. Its function is as follows. Catalyzes the phosphorylation of sphingosine to form sphingosine-1-phosphate (SPP), a lipid mediator with both intra- and extracellular functions. Also acts on D-erythro-dihydrosphingosine, D-erythro-sphingosine and L-threo-dihydrosphingosine. Binds phosphoinositides. In contrast to prosurvival SPHK1, has a positive effect on intracellular ceramide levels, inhibits cells growth and enhances apoptosis. In mitochondria, is important for cytochrome-c oxidase assembly and mitochondrial respiration. The SPP produced in mitochondria binds PHB2 and modulates the regulation via PHB2 of complex IV assembly and respiration. In nucleus, plays a role in epigenetic regulation of gene expression. Interacts with HDAC1 and HDAC2 and, through SPP production, inhibits their enzymatic activity, preventing the removal of acetyl groups from lysine residues with histones. Up-regulates acetylation of histone H3-K9, histone H4-K5 and histone H2B-K12. In nucleus, may have an inhibitory effect on DNA synthesis and cell cycle. In mast cells, is the main regulator of SPP production which mediates calcium influx, NF-kappa-B activation, cytokine production, such as TNF and IL6, and degranulation of mast cells. In dopaminergic neurons, is involved in promoting mitochondrial functions regulating ATP and ROS levels. Also involved in the regulation of glucose and lipid metabolism. The polypeptide is Sphingosine kinase 2 (Homo sapiens (Human)).